Here is a 172-residue protein sequence, read N- to C-terminus: Chromosome-anchoring protein RacA (172 aa).

Positions 5–25 (TSDVAIRLGVSPKTIQRWVRK) form a DNA-binding region, H-T-H motif. Disordered regions lie at residues 57-76 (AAME…RNNI) and 142-172 (QLNN…GLFA). Residues 62-71 (PPTPKRPPTP) show a composition bias toward pro residues. Residues 83–146 (ESIEPEIARV…ARLEQQLNNR (64 aa)) are a coiled coil. Residues 142-151 (QLNNRPPSSH) are compositionally biased toward polar residues.

The protein belongs to the RacA family.

The protein localises to the cytoplasm. In terms of biological role, required for the formation of axial filaments and for anchoring the origin regions at the cell poles in sporulating cells, thus ensuring proper chromosome segregation in the prespore. Binds in a dispersed manner throughout the chromosome but preferentially to sites clustered in the origin portion of the chromosome, causing condensation of the chromosome and its remodeling into an elongated, anchored structure. In Geobacillus kaustophilus (strain HTA426), this protein is Chromosome-anchoring protein RacA.